Here is a 602-residue protein sequence, read N- to C-terminus: Elongation factor 4 (602 aa).

The tr-type G domain occupies 2–184; sequence DHIRNFSIIA…AVIARMPPPK (183 aa). GTP-binding positions include 14–19 and 131–134; these read DHGKST and NKMD.

This sequence belongs to the TRAFAC class translation factor GTPase superfamily. Classic translation factor GTPase family. LepA subfamily.

The protein localises to the cell inner membrane. It catalyses the reaction GTP + H2O = GDP + phosphate + H(+). Its function is as follows. Required for accurate and efficient protein synthesis under certain stress conditions. May act as a fidelity factor of the translation reaction, by catalyzing a one-codon backward translocation of tRNAs on improperly translocated ribosomes. Back-translocation proceeds from a post-translocation (POST) complex to a pre-translocation (PRE) complex, thus giving elongation factor G a second chance to translocate the tRNAs correctly. Binds to ribosomes in a GTP-dependent manner. This Leptothrix cholodnii (strain ATCC 51168 / LMG 8142 / SP-6) (Leptothrix discophora (strain SP-6)) protein is Elongation factor 4.